The chain runs to 476 residues: UPF0481 protein At3g47200 (476 aa).

The disordered stretch occupies residues 1–24 (MADKTDIISSSSDKASPPPPSAFR). The next 2 helical transmembrane spans lie at 133-153 (LMFM…IMSG) and 439-459 (AVLF…LSYL).

This sequence belongs to the UPF0481 family.

The protein resides in the membrane. The sequence is that of UPF0481 protein At3g47200 from Arabidopsis thaliana (Mouse-ear cress).